Here is a 459-residue protein sequence, read N- to C-terminus: Cysteine--tRNA ligase (459 aa).

Cysteine 29 provides a ligand contact to Zn(2+). The 'HIGH' region signature appears at 31–41 (PTVYDRAHIGN). Zn(2+)-binding residues include cysteine 209, histidine 234, and glutamate 238. Positions 266-270 (KMSKS) match the 'KMSKS' region motif. Residue lysine 269 coordinates ATP.

The protein belongs to the class-I aminoacyl-tRNA synthetase family. In terms of assembly, monomer. The cofactor is Zn(2+).

Its subcellular location is the cytoplasm. The enzyme catalyses tRNA(Cys) + L-cysteine + ATP = L-cysteinyl-tRNA(Cys) + AMP + diphosphate. This chain is Cysteine--tRNA ligase, found in Paramagnetospirillum magneticum (strain ATCC 700264 / AMB-1) (Magnetospirillum magneticum).